The sequence spans 159 residues: Ribosomal RNA large subunit methyltransferase H (159 aa).

S-adenosyl-L-methionine is bound by residues Leu-76, Gly-108, and 127–132 (FSKMTF).

Belongs to the RNA methyltransferase RlmH family. Homodimer.

It is found in the cytoplasm. The catalysed reaction is pseudouridine(1915) in 23S rRNA + S-adenosyl-L-methionine = N(3)-methylpseudouridine(1915) in 23S rRNA + S-adenosyl-L-homocysteine + H(+). In terms of biological role, specifically methylates the pseudouridine at position 1915 (m3Psi1915) in 23S rRNA. In Clostridium tetani (strain Massachusetts / E88), this protein is Ribosomal RNA large subunit methyltransferase H.